A 418-amino-acid polypeptide reads, in one-letter code: UDP-N-acetylglucosamine 1-carboxyvinyltransferase (418 aa).

A phosphoenolpyruvate-binding site is contributed by 22-23 (KN). R91 lines the UDP-N-acetyl-alpha-D-glucosamine pocket. C115 serves as the catalytic Proton donor. C115 is modified (2-(S-cysteinyl)pyruvic acid O-phosphothioketal). Positions 305 and 327 each coordinate UDP-N-acetyl-alpha-D-glucosamine.

The protein belongs to the EPSP synthase family. MurA subfamily.

Its subcellular location is the cytoplasm. It carries out the reaction phosphoenolpyruvate + UDP-N-acetyl-alpha-D-glucosamine = UDP-N-acetyl-3-O-(1-carboxyvinyl)-alpha-D-glucosamine + phosphate. Its pathway is cell wall biogenesis; peptidoglycan biosynthesis. Functionally, cell wall formation. Adds enolpyruvyl to UDP-N-acetylglucosamine. This Aeromonas hydrophila subsp. hydrophila (strain ATCC 7966 / DSM 30187 / BCRC 13018 / CCUG 14551 / JCM 1027 / KCTC 2358 / NCIMB 9240 / NCTC 8049) protein is UDP-N-acetylglucosamine 1-carboxyvinyltransferase.